The following is a 145-amino-acid chain: Transcription antitermination protein NusB (145 aa).

The protein belongs to the NusB family.

Functionally, involved in transcription antitermination. Required for transcription of ribosomal RNA (rRNA) genes. Binds specifically to the boxA antiterminator sequence of the ribosomal RNA (rrn) operons. This Burkholderia lata (strain ATCC 17760 / DSM 23089 / LMG 22485 / NCIMB 9086 / R18194 / 383) protein is Transcription antitermination protein NusB.